Consider the following 118-residue polypeptide: Ribosome-binding factor A (118 aa).

Belongs to the RbfA family. In terms of assembly, monomer. Binds 30S ribosomal subunits, but not 50S ribosomal subunits or 70S ribosomes.

The protein localises to the cytoplasm. In terms of biological role, one of several proteins that assist in the late maturation steps of the functional core of the 30S ribosomal subunit. Associates with free 30S ribosomal subunits (but not with 30S subunits that are part of 70S ribosomes or polysomes). Required for efficient processing of 16S rRNA. May interact with the 5'-terminal helix region of 16S rRNA. This Shouchella clausii (strain KSM-K16) (Alkalihalobacillus clausii) protein is Ribosome-binding factor A.